We begin with the raw amino-acid sequence, 76 residues long: DNA-binding protein S1FA2 (76 aa).

The short motif at 50–55 (PPRKKK) is the Nuclear localization signal element. The span at 51–66 (PRKKKPLSKKKLKREK) shows a compositional bias: basic residues. Residues 51 to 76 (PRKKKPLSKKKLKREKLKQGVPVPGE) form a disordered region.

Belongs to the S1FA transcription factor family.

It localises to the nucleus. Its function is as follows. DNA-binding protein that specifically recognizes a negative element (S1F) within the RPS1 promoter. In Arabidopsis thaliana (Mouse-ear cress), this protein is DNA-binding protein S1FA2 (S1FA2).